The sequence spans 147 residues: uncharacterized protein (147 aa).

A helical membrane pass occupies residues 3–23 (APMIGMVVLVVVLGLAVLALS).

The protein to M.leprae ML1147.

It localises to the membrane. This is an uncharacterized protein from Mycobacterium tuberculosis (strain CDC 1551 / Oshkosh).